We begin with the raw amino-acid sequence, 416 residues long: Probable carboxypeptidase An18g06210 (416 aa).

The signal sequence occupies residues 1-16; it reads MKSPISLLAAVGVASA. Asn-54, Asn-70, and Asn-129 each carry an N-linked (GlcNAc...) asparagine glycan. A Zn(2+)-binding site is contributed by Asp-142. Catalysis depends on Glu-174, which acts as the Proton acceptor. Glu-175 contacts Zn(2+). N-linked (GlcNAc...) asparagine glycosylation is found at Asn-187 and Asn-319.

This sequence belongs to the peptidase M20A family. Zn(2+) is required as a cofactor.

It localises to the secreted. The protein is Probable carboxypeptidase An18g06210 of Aspergillus niger (strain ATCC MYA-4892 / CBS 513.88 / FGSC A1513).